The chain runs to 216 residues: Small ribosomal subunit protein uS3 (216 aa).

The KH type-2 domain maps to 38 to 106; the sequence is LRKMLKDKLY…QANIEIKEVR (69 aa).

It belongs to the universal ribosomal protein uS3 family. Part of the 30S ribosomal subunit. Forms a tight complex with proteins S10 and S14.

Functionally, binds the lower part of the 30S subunit head. Binds mRNA in the 70S ribosome, positioning it for translation. The chain is Small ribosomal subunit protein uS3 from Thermodesulfovibrio yellowstonii (strain ATCC 51303 / DSM 11347 / YP87).